The primary structure comprises 103 residues: Pyrimidine/purine nucleoside phosphorylase (103 aa).

This sequence belongs to the nucleoside phosphorylase PpnP family.

The enzyme catalyses a purine D-ribonucleoside + phosphate = a purine nucleobase + alpha-D-ribose 1-phosphate. It carries out the reaction adenosine + phosphate = alpha-D-ribose 1-phosphate + adenine. It catalyses the reaction cytidine + phosphate = cytosine + alpha-D-ribose 1-phosphate. The catalysed reaction is guanosine + phosphate = alpha-D-ribose 1-phosphate + guanine. The enzyme catalyses inosine + phosphate = alpha-D-ribose 1-phosphate + hypoxanthine. It carries out the reaction thymidine + phosphate = 2-deoxy-alpha-D-ribose 1-phosphate + thymine. It catalyses the reaction uridine + phosphate = alpha-D-ribose 1-phosphate + uracil. The catalysed reaction is xanthosine + phosphate = alpha-D-ribose 1-phosphate + xanthine. In terms of biological role, catalyzes the phosphorolysis of diverse nucleosides, yielding D-ribose 1-phosphate and the respective free bases. Can use uridine, adenosine, guanosine, cytidine, thymidine, inosine and xanthosine as substrates. Also catalyzes the reverse reactions. This Shewanella sp. (strain W3-18-1) protein is Pyrimidine/purine nucleoside phosphorylase.